Consider the following 330-residue polypeptide: Aspartate--ammonia ligase (330 aa).

It belongs to the class-II aminoacyl-tRNA synthetase family. AsnA subfamily.

It is found in the cytoplasm. The enzyme catalyses L-aspartate + NH4(+) + ATP = L-asparagine + AMP + diphosphate + H(+). The protein operates within amino-acid biosynthesis; L-asparagine biosynthesis; L-asparagine from L-aspartate (ammonia route): step 1/1. This Treponema pallidum (strain Nichols) protein is Aspartate--ammonia ligase.